Reading from the N-terminus, the 244-residue chain is Protein-lysine methyltransferase METTL21E (244 aa).

The interval 1–20 (MDLTVTHITHKETYKEPRDD) is disordered. Over residues 9–18 (THKETYKEPR) the composition is skewed to basic and acidic residues. S-adenosyl-L-methionine-binding positions include Trp-69, 97-99 (GAG), Asp-118, Trp-149, and Ala-170.

The protein belongs to the methyltransferase superfamily. METTL21 family.

In terms of biological role, protein-lysine methyltransferase. The sequence is that of Protein-lysine methyltransferase METTL21E (Mettl21e) from Mus musculus (Mouse).